Reading from the N-terminus, the 485-residue chain is uncharacterized protein (485 aa).

The signal sequence occupies residues 1–23; it reads MRRRVCTVVRAVVCLLSTSLLTT. The N-palmitoyl cysteine moiety is linked to residue C24. A lipid anchor (S-diacylglycerol cysteine) is attached at C24. The segment covering 308–327 has biased composition (low complexity); that stretch reads SAASSPAQCPSSPSSSSSSS. The tract at residues 308–331 is disordered; the sequence is SAASSPAQCPSSPSSSSSSSTNAG.

This sequence belongs to the TP013X lipoprotein family.

Its subcellular location is the cell membrane. This is an uncharacterized protein from Treponema pallidum (strain Nichols).